Here is a 315-residue protein sequence, read N- to C-terminus: Olfactory receptor 52R1 (315 aa).

The Extracellular segment spans residues 1–28 (MVLASGNSSSHPVSFILLGIPGLESFQL). N7 carries an N-linked (GlcNAc...) asparagine glycan. A helical transmembrane segment spans residues 29–49 (WIAFPFCATYAVAVVGNITLL). Topologically, residues 50–57 (HVIRIDHT) are cytoplasmic. The chain crosses the membrane as a helical span at residues 58–78 (LHEPMYLFLAMLAITDLVLSS). The Extracellular portion of the chain corresponds to 79–102 (STQPKMLAIFWFHAHEIQYHACLI). A disulfide bond links C100 and C192. The helical transmembrane segment at 103–123 (QVFFIHAFSSVESGVLMAMAL) threads the bilayer. Residues 124–142 (DCYVAICFPLRHSSILTPS) are Cytoplasmic-facing. The helical transmembrane segment at 143–163 (VVIKLGTIVMLRGLLWVSPFC) threads the bilayer. The Extracellular segment spans residues 164 to 199 (FMVSRMPFCQHQAIPQSYCEHMAVLKLVCADTSISR). A helical membrane pass occupies residues 200–220 (GNGLFVAFSVAGFDMIVIGMS). Residues 221–240 (YVMILRAVLQLPSGEARLKA) lie on the Cytoplasmic side of the membrane. A helical transmembrane segment spans residues 241–261 (FSTRSSHICVILALYIPALFS). Over 262–276 (FLTYRFGHDVPRVVH) the chain is Extracellular. A helical membrane pass occupies residues 277–297 (ILFANLYLLIPPMLNPIIYGV). At 298 to 315 (RTKQIGDRVIQGCCGNIP) the chain is on the cytoplasmic side.

It belongs to the G-protein coupled receptor 1 family.

It is found in the cell membrane. In terms of biological role, odorant receptor. In Homo sapiens (Human), this protein is Olfactory receptor 52R1 (OR52R1).